We begin with the raw amino-acid sequence, 488 residues long: Eukaryotic translation initiation factor 3 subunit L (488 aa).

Disordered stretches follow at residues 1–34 and 427–449; these read MSLPQHQNRDAARRAPDDDDDAEEETMANDYREQ and SEGGLLERRGDPQQRSRLRHGKE. Over residues 7–16 the composition is skewed to basic and acidic residues; it reads QNRDAARRAP. The segment covering 17-27 has biased composition (acidic residues); the sequence is DDDDDAEEETM. In terms of domain architecture, PCI spans 256–450; it reads DAIRMFSHIL…RSRLRHGKEI (195 aa). Residues 431–440 are compositionally biased toward basic and acidic residues; it reads LLERRGDPQQ.

Belongs to the eIF-3 subunit L family. As to quaternary structure, component of the eukaryotic translation initiation factor 3 (eIF-3) complex.

The protein resides in the cytoplasm. Its function is as follows. Component of the eukaryotic translation initiation factor 3 (eIF-3) complex, which is involved in protein synthesis of a specialized repertoire of mRNAs and, together with other initiation factors, stimulates binding of mRNA and methionyl-tRNAi to the 40S ribosome. The eIF-3 complex specifically targets and initiates translation of a subset of mRNAs involved in cell proliferation. This chain is Eukaryotic translation initiation factor 3 subunit L, found in Phaeosphaeria nodorum (strain SN15 / ATCC MYA-4574 / FGSC 10173) (Glume blotch fungus).